The following is a 145-amino-acid chain: Histone H2B.1, sperm (145 aa).

The disordered stretch occupies residues 1–52 (MPSQKSPTKRSPTKRSPTKRSPQKGGKGGKGAKRGGKAGKRRRGVQVKRRRR). 4 consecutive short sequence motifs (SPKK motif) follow at residues 6–9 (SPTK), 11–14 (SPTK), 16–19 (SPTK), and 21–24 (SPQK). Basic residues-rich tracts occupy residues 7 to 22 (PTKR…KRSP) and 30 to 52 (KGAK…RRRR). Residues Ser16 and Ser21 each carry the phosphoserine modification. Ser132 carries O-linked (GlcNAc) serine glycosylation. Residue Lys140 forms a Glycyl lysine isopeptide (Lys-Gly) (interchain with G-Cter in ubiquitin) linkage.

Belongs to the histone H2B family. The nucleosome is a histone octamer containing two molecules each of H2A, H2B, H3 and H4 assembled in one H3-H4 heterotetramer and two H2A-H2B heterodimers. The octamer wraps approximately 147 bp of DNA. In terms of processing, monoubiquitination of Lys-140 gives a specific tag for epigenetic transcriptional activation and is also prerequisite for histone H3 'Lys-4' and 'Lys-79' methylation. Phosphorylated on SPKK motifs 3 and 4; which may regulate DNA binding. Dephosphorylated during maturation of spermatids to mature sperm and rephosphorylated at fertilization. Post-translationally, glcNAcylation at Ser-132 promotes monoubiquitination of Lys-140. It fluctuates in response to extracellular glucose, and associates with transcribed genes.

It is found in the nucleus. Its subcellular location is the chromosome. Its function is as follows. Core component of nucleosome. Nucleosomes wrap and compact DNA into chromatin, limiting DNA accessibility to the cellular machineries which require DNA as a template. Histones thereby play a central role in transcription regulation, DNA repair, DNA replication and chromosomal stability. DNA accessibility is regulated via a complex set of post-translational modifications of histones, also called histone code, and nucleosome remodeling. The sequence is that of Histone H2B.1, sperm from Parechinus angulosus (Angulate sea urchin).